Reading from the N-terminus, the 650-residue chain is NAC domain-containing protein 54 (650 aa).

Residues 6–156 form the NAC domain; the sequence is LPPGFRFHPT…AYALCRVFKK (151 aa). Residues 105 to 162 mediate DNA binding; it reads VGMKKTLVYYRGRAPHGSRTDWVMHEYRLDERECETDTGLQDAYALCRVFKKTAPGPK.

In terms of tissue distribution, expressed in leaves, roots and flowers.

It is found in the nucleus. Functionally, transcription factor that functions as a regulator of the jasmonate (JA) signaling pathway. May regulate the expression of genes encoding JA biosynthetic enzymes, such as lipoxygenase 7 (CM-LOX1), allene oxide synthase 2 (AOS2) and OPDA reductase 7 (OPR7). Involved in abscisic acid-induced leaf senescence. Activates the abscisic acid (ABA) signaling-associated gene ABI5 and the senescence-associated gene NYC1 by directly binding to the mitochondrial dysfunction motif (MDM) present in their promoters. Possesses transcriptional activator activity in yeast. Required for the multiplication of the rice dwarf virus (RDV). This Oryza sativa subsp. japonica (Rice) protein is NAC domain-containing protein 54.